Here is a 71-residue protein sequence, read N- to C-terminus: Antitoxin VapB26 (71 aa).

Functionally, antitoxin component of a type II toxin-antitoxin (TA) system. Upon expression in M.smegmatis neutralizes the effect of cognate toxin VapC26. The protein is Antitoxin VapB26 (vapB26) of Mycobacterium tuberculosis (strain ATCC 25618 / H37Rv).